Reading from the N-terminus, the 323-residue chain is Porphobilinogen deaminase (323 aa).

C251 carries the post-translational modification S-(dipyrrolylmethanemethyl)cysteine.

This sequence belongs to the HMBS family. In terms of assembly, monomer. Dipyrromethane is required as a cofactor.

It catalyses the reaction 4 porphobilinogen + H2O = hydroxymethylbilane + 4 NH4(+). Its pathway is porphyrin-containing compound metabolism; protoporphyrin-IX biosynthesis; coproporphyrinogen-III from 5-aminolevulinate: step 2/4. The protein operates within porphyrin-containing compound metabolism; chlorophyll biosynthesis. Tetrapolymerization of the monopyrrole PBG into the hydroxymethylbilane pre-uroporphyrinogen in several discrete steps. In Nostoc sp. (strain PCC 7120 / SAG 25.82 / UTEX 2576), this protein is Porphobilinogen deaminase (hemC).